The following is a 287-amino-acid chain: Homoserine kinase (287 aa).

Pro-78–Ser-88 contacts ATP.

It belongs to the GHMP kinase family. Homoserine kinase subfamily.

The protein localises to the cytoplasm. It catalyses the reaction L-homoserine + ATP = O-phospho-L-homoserine + ADP + H(+). Its pathway is amino-acid biosynthesis; L-threonine biosynthesis; L-threonine from L-aspartate: step 4/5. In terms of biological role, catalyzes the ATP-dependent phosphorylation of L-homoserine to L-homoserine phosphate. The protein is Homoserine kinase of Lactobacillus acidophilus (strain ATCC 700396 / NCK56 / N2 / NCFM).